A 297-amino-acid polypeptide reads, in one-letter code: Bifunctional protein FolD 2 (297 aa).

Residues 173 to 175 (GKS), Ser-198, and Ile-239 contribute to the NADP(+) site.

The protein belongs to the tetrahydrofolate dehydrogenase/cyclohydrolase family. Homodimer.

It catalyses the reaction (6R)-5,10-methylene-5,6,7,8-tetrahydrofolate + NADP(+) = (6R)-5,10-methenyltetrahydrofolate + NADPH. The enzyme catalyses (6R)-5,10-methenyltetrahydrofolate + H2O = (6R)-10-formyltetrahydrofolate + H(+). The protein operates within one-carbon metabolism; tetrahydrofolate interconversion. Catalyzes the oxidation of 5,10-methylenetetrahydrofolate to 5,10-methenyltetrahydrofolate and then the hydrolysis of 5,10-methenyltetrahydrofolate to 10-formyltetrahydrofolate. This Sinorhizobium medicae (strain WSM419) (Ensifer medicae) protein is Bifunctional protein FolD 2.